The primary structure comprises 273 residues: Outer surface protein A (273 aa).

A signal peptide spans 1-16 (MKKYLLGIGLILALIA). The N-palmitoyl cysteine moiety is linked to residue C17. The S-diacylglycerol cysteine moiety is linked to residue C17.

This sequence belongs to the OspA lipoprotein family.

The protein localises to the cell outer membrane. It localises to the cell surface. This Borreliella burgdorferi (Lyme disease spirochete) protein is Outer surface protein A.